Here is a 317-residue protein sequence, read N- to C-terminus: Melanocyte-stimulating hormone receptor (317 aa).

The Extracellular segment spans residues Met-1–Glu-37. Asn-29 carries N-linked (GlcNAc...) asparagine glycosylation. A helical membrane pass occupies residues Val-38 to Ile-63. The Cytoplasmic portion of the chain corresponds to Ala-64–Ser-72. A helical transmembrane segment spans residues Met-73–Leu-93. The Extracellular portion of the chain corresponds to Glu-94–Asn-118. Residues Thr-119–Val-140 traverse the membrane as a helical segment. Residues Asp-141–Arg-163 are Cytoplasmic-facing. A helical transmembrane segment spans residues Val-164 to Tyr-183. At Asp-184–Cys-191 the chain is on the extracellular side. Residues Leu-192–Leu-211 form a helical membrane-spanning segment. Over Ala-212 to Ala-240 the chain is Cytoplasmic. A helical membrane pass occupies residues Ala-241–Phe-266. Over Cys-267–Asn-279 the chain is Extracellular. The helical transmembrane segment at Phe-280 to Phe-300 threads the bilayer. The Cytoplasmic portion of the chain corresponds to Arg-301–Trp-317. Cys-315 carries the S-palmitoyl cysteine lipid modification.

This sequence belongs to the G-protein coupled receptor 1 family. In terms of assembly, interacts with MGRN1, but does not undergo MGRN1-mediated ubiquitination; this interaction competes with GNAS-binding and thus inhibits agonist-induced cAMP production. Interacts with OPN3; the interaction results in a decrease in MC1R-mediated cAMP signaling and ultimately a decrease in melanin production in melanocytes.

Its subcellular location is the cell membrane. In terms of biological role, receptor for MSH (alpha, beta and gamma) and ACTH. The activity of this receptor is mediated by G proteins which activate adenylate cyclase. Mediates melanogenesis, the production of eumelanin (black/brown) and phaeomelanin (red/yellow), via regulation of cAMP signaling in melanocytes. The protein is Melanocyte-stimulating hormone receptor (MC1R) of Saguinus imperator (Emperor tamarin).